A 156-amino-acid chain; its full sequence is MADPEKQGPAESRAEDEVMEGAQGGEDAATGDSAAAPAAEEPQAPAENAPKPKKDFMESLPNSVKCRVLALKKLQKRCDKIEAKFDKEFQALEKKYNDIYKPLLAKIQELTGEMEGCAWTLEGEDDEDDEEEDDEEEEEEEEAAAGATGGPNFAKK.

Basic and acidic residues predominate over residues 1–16 (MADPEKQGPAESRAED). The disordered stretch occupies residues 1 to 58 (MADPEKQGPAESRAEDEVMEGAQGGEDAATGDSAAAPAAEEPQAPAENAPKPKKDFME). Low complexity predominate over residues 34 to 49 (AAAPAAEEPQAPAENA). A coiled-coil region spans residues 68–94 (VLALKKLQKRCDKIEAKFDKEFQALEK). The segment at 120 to 156 (TLEGEDDEDDEEEDDEEEEEEEEAAAGATGGPNFAKK) is disordered. Positions 122–143 (EGEDDEDDEEEDDEEEEEEEEA) are enriched in acidic residues.

This sequence belongs to the nucleosome assembly protein (NAP) family.

The protein localises to the nucleus. The sequence is that of Nucleosome assembly protein 1-like 5 (Nap1l5) from Mus musculus (Mouse).